The chain runs to 117 residues: Small ribosomal subunit protein uS8c (117 aa).

It belongs to the universal ribosomal protein uS8 family. As to quaternary structure, part of the 30S ribosomal subunit.

Its subcellular location is the plastid. The protein resides in the chloroplast. One of the primary rRNA binding proteins, it binds directly to 16S rRNA central domain where it helps coordinate assembly of the platform of the 30S subunit. The chain is Small ribosomal subunit protein uS8c (rps8) from Cyanidioschyzon merolae (strain NIES-3377 / 10D) (Unicellular red alga).